Here is a 631-residue protein sequence, read N- to C-terminus: Phosphomethylpyrimidine synthase (631 aa).

Substrate-binding positions include asparagine 231, methionine 260, tyrosine 289, histidine 325, 345-347 (SRG), 386-389 (DGLR), and glutamate 425. A Zn(2+)-binding site is contributed by histidine 429. Tyrosine 452 serves as a coordination point for substrate. Position 493 (histidine 493) interacts with Zn(2+). Residues cysteine 573, cysteine 576, and cysteine 581 each coordinate [4Fe-4S] cluster.

Belongs to the ThiC family. As to quaternary structure, homodimer. The cofactor is [4Fe-4S] cluster.

It carries out the reaction 5-amino-1-(5-phospho-beta-D-ribosyl)imidazole + S-adenosyl-L-methionine = 4-amino-2-methyl-5-(phosphooxymethyl)pyrimidine + CO + 5'-deoxyadenosine + formate + L-methionine + 3 H(+). The protein operates within cofactor biosynthesis; thiamine diphosphate biosynthesis. Catalyzes the synthesis of the hydroxymethylpyrimidine phosphate (HMP-P) moiety of thiamine from aminoimidazole ribotide (AIR) in a radical S-adenosyl-L-methionine (SAM)-dependent reaction. The sequence is that of Phosphomethylpyrimidine synthase from Acinetobacter baylyi (strain ATCC 33305 / BD413 / ADP1).